The chain runs to 392 residues: Pectate lyase 3 (392 aa).

A signal peptide spans methionine 1–serine 25. An N-linked (GlcNAc...) asparagine glycan is attached at asparagine 37. Cysteine 54 and cysteine 71 are disulfide-bonded. Ca(2+) contacts are provided by aspartate 194, aspartate 218, and aspartate 222. Arginine 270 is an active-site residue.

It belongs to the polysaccharide lyase 1 family. Amb a subfamily. Monomer. The cofactor is Ca(2+). The N-terminus is blocked. As to expression, pollen and flowers.

It carries out the reaction Eliminative cleavage of (1-&gt;4)-alpha-D-galacturonan to give oligosaccharides with 4-deoxy-alpha-D-galact-4-enuronosyl groups at their non-reducing ends.. The protein operates within glycan metabolism; pectin degradation; 2-dehydro-3-deoxy-D-gluconate from pectin: step 2/5. Has pectate lyase activity. The sequence is that of Pectate lyase 3 from Ambrosia artemisiifolia (Common ragweed).